The following is a 220-amino-acid chain: CASP-like protein 1E1 (220 aa).

The Cytoplasmic segment spans residues 1 to 57; sequence METPTPRVKPGFNGVGVGMGSSVNGSSRRAGYYMGPAGAVAVAGGGRAAAAAPVDGC. The chain crosses the membrane as a helical span at residues 58 to 78; the sequence is SVALRVFVLAATLVSAVVMGV. Residues 79–108 are Extracellular-facing; it reads DRQTSTIRITVTDALPPLEVPLTANWSYSS. Asn-103 carries an N-linked (GlcNAc...) asparagine glycan. Residues 109-129 form a helical membrane-spanning segment; it reads AFVYFVVANAMVCLFSAAALA. Over 130–144 the chain is Cytoplasmic; sequence ACRSRAAMVPVMVGD. Residues 145-165 traverse the membrane as a helical segment; that stretch reads LLALALLYSAVGAAAEFGILG. At 166 to 187 the chain is on the extracellular side; that stretch reads ERGNSHVRWPKVCNVYGRFCER. A helical membrane pass occupies residues 188-208; it reads AMAAVIVSLIAAFANLVLLML. Over 209–220 the chain is Cytoplasmic; that stretch reads NILTIHKSSSYY.

The protein belongs to the Casparian strip membrane proteins (CASP) family. Homodimer and heterodimers.

The protein resides in the cell membrane. This is CASP-like protein 1E1 from Zea mays (Maize).